Here is a 363-residue protein sequence, read N- to C-terminus: MGNIHIQTKSKEYDVYVGKESLSHLTTIVQNMQPSVSNIMIISDEAVASLHLQTVVDALQIDQKVFSFVVPSGEKEKSFENFYAAHTSALENKLDRNSLIIALGGGMIGDLAGFVAASFMRGIRFVQVPTTLLAHDSAVGGKVAINHPLGKNMIGAFHQPEAVVYHTPFLQSLPEKEWRSGYAEVIKHALIGDVKLYHWLKEEVQTLADLRDEKLIHILMKAIPVKANIVAQDETEKGVRAHLNFGHTLGHALEKELGYGNITHGDGVAVGMLFAIFLSEQVYKVNLAYEEMKQWFLNYGYPKMPSDLSVERLVGLMKQDKKANAGTIHMVLMQEYGVVNVVSIPDETVHIALEAFQKDMVEK.

Residues 72–77 (SGEKEK), 130–131 (TT), Lys142, and Lys151 contribute to the NAD(+) site. Zn(2+)-binding residues include Glu184, His247, and His264.

It belongs to the sugar phosphate cyclases superfamily. Dehydroquinate synthase family. Co(2+) serves as cofactor. It depends on Zn(2+) as a cofactor. NAD(+) is required as a cofactor.

Its subcellular location is the cytoplasm. The catalysed reaction is 7-phospho-2-dehydro-3-deoxy-D-arabino-heptonate = 3-dehydroquinate + phosphate. The protein operates within metabolic intermediate biosynthesis; chorismate biosynthesis; chorismate from D-erythrose 4-phosphate and phosphoenolpyruvate: step 2/7. Its function is as follows. Catalyzes the conversion of 3-deoxy-D-arabino-heptulosonate 7-phosphate (DAHP) to dehydroquinate (DHQ). The protein is 3-dehydroquinate synthase of Bacillus anthracis (strain A0248).